Reading from the N-terminus, the 598-residue chain is DNA ligase (598 aa).

ATP is bound at residue aspartate 258. Lysine 260 serves as the catalytic N6-AMP-lysine intermediate. 6 residues coordinate ATP: arginine 265, arginine 280, glutamate 310, phenylalanine 350, arginine 427, and lysine 433.

Belongs to the ATP-dependent DNA ligase family. The cofactor is Mg(2+).

The catalysed reaction is ATP + (deoxyribonucleotide)n-3'-hydroxyl + 5'-phospho-(deoxyribonucleotide)m = (deoxyribonucleotide)n+m + AMP + diphosphate.. In terms of biological role, DNA ligase that seals nicks in double-stranded DNA during DNA replication, DNA recombination and DNA repair. The polypeptide is DNA ligase (Sulfolobus acidocaldarius (strain ATCC 33909 / DSM 639 / JCM 8929 / NBRC 15157 / NCIMB 11770)).